Consider the following 1057-residue polypeptide: Outer capsid protein VP2 (1057 aa).

This sequence belongs to the orbivirus VP2 family.

The protein localises to the virion. The VP2 protein is one of the two proteins (with VP5) which constitute the virus particle outer capsid. It is the major target of the host immunogenic response. The polypeptide is Outer capsid protein VP2 (Segment-2) (Anas (ducks)).